A 437-amino-acid chain; its full sequence is Protein arginine methyltransferase NDUFAF7, mitochondrial (437 aa).

The N-terminal 42 residues, 1–42 (MSGLARLQRLQKFGFLMVSASANRPIQRYQCSRTEKPQKRTS), are a transit peptide targeting the mitochondrion.

It belongs to the NDUFAF7 family.

It localises to the mitochondrion. It catalyses the reaction L-arginyl-[protein] + 2 S-adenosyl-L-methionine = N(omega),N(omega)'-dimethyl-L-arginyl-[protein] + 2 S-adenosyl-L-homocysteine + 2 H(+). Arginine methyltransferase involved in the assembly or stability of mitochondrial NADH:ubiquinone oxidoreductase complex (complex I). Acts by mediating symmetric dimethylation of 'Arg-118' of ndufs2 after it assembles into the complex I, stabilizing the early intermediate complex. This chain is Protein arginine methyltransferase NDUFAF7, mitochondrial, found in Xenopus laevis (African clawed frog).